Reading from the N-terminus, the 300-residue chain is Type II methyltransferase M.Cfr9I (300 aa).

The tract at residues 109-129 (RGYRAPDKKNPARAMAVRPDT) is disordered.

The protein belongs to the N(4)/N(6)-methyltransferase family. N(4) subfamily.

It catalyses the reaction a 2'-deoxycytidine in DNA + S-adenosyl-L-methionine = an N(4)-methyl-2'-deoxycytidine in DNA + S-adenosyl-L-homocysteine + H(+). Functionally, a beta subtype methylase, recognizes the double-stranded sequence 5'-CCCGGG-3', methylates C-2 on both strands, and protects the DNA from cleavage by the Cfr9I endonuclease. This Citrobacter freundii protein is Type II methyltransferase M.Cfr9I.